Here is a 209-residue protein sequence, read N- to C-terminus: 2-phospho-L-lactate guanylyltransferase (209 aa).

Belongs to the CofC family. Homodimer.

The enzyme catalyses (2S)-2-phospholactate + GTP + H(+) = (2S)-lactyl-2-diphospho-5'-guanosine + diphosphate. It participates in cofactor biosynthesis; coenzyme F420 biosynthesis. In terms of biological role, guanylyltransferase that catalyzes the activation of (2S)-2-phospholactate (2-PL) as (2S)-lactyl-2-diphospho-5'-guanosine, via the condensation of 2-PL with GTP. It is involved in the biosynthesis of coenzyme F420, a hydride carrier cofactor. In Methanosphaerula palustris (strain ATCC BAA-1556 / DSM 19958 / E1-9c), this protein is 2-phospho-L-lactate guanylyltransferase.